Consider the following 1122-residue polypeptide: Protein phosphatase 1 regulatory subunit 3A (1122 aa).

The interval 32 to 58 is disordered; it reads TFQPGFSPQPSRRGSDSSEDIYLDTPS. Residues Ser38 and Ser42 each carry the phosphoserine; by GSK3 modification. The residue at position 46 (Ser46) is a Phosphoserine; by PKA and ISPK. The residue at position 49 (Ser49) is a Phosphoserine. Thr56 carries the phosphothreonine modification. The PP1-binding motif signature appears at 62–65; it reads RRVS. Ser65 bears the Phosphoserine; by PKA mark. One can recognise a CBM21 domain in the interval 122–230; the sequence is QLQIQKAILE…NNNGTNYTFI (109 aa). 4 disordered regions span residues 332 to 351, 395 to 422, 496 to 516, and 640 to 668; these read STAS…NFPN, SSGD…LGDT, CLKE…NGKD, and GINS…SREN. Basic and acidic residues-rich tracts occupy residues 395–405 and 499–516; these read SSGDDCTHQPS and ESTE…NGKD. Positions 640 to 662 are enriched in polar residues; the sequence is GINSEDQDNSPQHKQSWNVLESQ. Phosphoserine is present on Ser844. Over residues 963-977 the composition is skewed to basic and acidic residues; the sequence is IEKHPYPESKPEEVS. 2 disordered regions span residues 963–983 and 1025–1058; these read IEKH…SGIV and RHEN…PVEE. Composition is skewed to polar residues over residues 1031 to 1040 and 1048 to 1058; these read LVSSGQSLYT and SSASTSLPVEE. Residues 1078 to 1098 traverse the membrane as a helical segment; that stretch reads YFLLFLIFLITVYHYDLMIGL.

Interacts with PPP1CC catalytic subunit of PP1, and associates with glycogen. Phosphorylation at Ser-46 by ISPK stimulates the dephosphorylation of glycogen synthase and phosphorylase kinase. As to expression, skeletal muscle and heart.

Its subcellular location is the membrane. Seems to act as a glycogen-targeting subunit for PP1. PP1 is essential for cell division, and participates in the regulation of glycogen metabolism, muscle contractility and protein synthesis. Plays an important role in glycogen synthesis but is not essential for insulin activation of glycogen synthase. This Homo sapiens (Human) protein is Protein phosphatase 1 regulatory subunit 3A (PPP1R3A).